We begin with the raw amino-acid sequence, 418 residues long: Serine hydroxymethyltransferase (418 aa).

(6S)-5,6,7,8-tetrahydrofolate-binding positions include Leu-118 and 122–124 (GHL). Lys-227 is modified (N6-(pyridoxal phosphate)lysine). Position 242 (Glu-242) interacts with (6S)-5,6,7,8-tetrahydrofolate.

The protein belongs to the SHMT family. Homodimer. It depends on pyridoxal 5'-phosphate as a cofactor.

It is found in the cytoplasm. It catalyses the reaction (6R)-5,10-methylene-5,6,7,8-tetrahydrofolate + glycine + H2O = (6S)-5,6,7,8-tetrahydrofolate + L-serine. It functions in the pathway one-carbon metabolism; tetrahydrofolate interconversion. It participates in amino-acid biosynthesis; glycine biosynthesis; glycine from L-serine: step 1/1. Functionally, catalyzes the reversible interconversion of serine and glycine with tetrahydrofolate (THF) serving as the one-carbon carrier. This reaction serves as the major source of one-carbon groups required for the biosynthesis of purines, thymidylate, methionine, and other important biomolecules. Also exhibits THF-independent aldolase activity toward beta-hydroxyamino acids, producing glycine and aldehydes, via a retro-aldol mechanism. The protein is Serine hydroxymethyltransferase of Chloroflexus aggregans (strain MD-66 / DSM 9485).